Consider the following 70-residue polypeptide: Large ribosomal subunit protein eL38 (70 aa).

Lysine 4 is covalently cross-linked (Glycyl lysine isopeptide (Lys-Gly) (interchain with G-Cter in SUMO2)). At lysine 9 the chain carries N6-acetyllysine; alternate. Lysine 9 is covalently cross-linked (Glycyl lysine isopeptide (Lys-Gly) (interchain with G-Cter in SUMO2); alternate). At lysine 67 the chain carries N6-acetyllysine.

The protein belongs to the eukaryotic ribosomal protein eL38 family. As to quaternary structure, component of the large ribosomal subunit.

It localises to the cytoplasm. Its function is as follows. Component of the large ribosomal subunit. The ribosome is a large ribonucleoprotein complex responsible for the synthesis of proteins in the cell. The protein is Large ribosomal subunit protein eL38 (RPL38) of Homo sapiens (Human).